Here is a 476-residue protein sequence, read N- to C-terminus: Lactate utilization protein B (476 aa).

4Fe-4S ferredoxin-type domains are found at residues 304 to 334 (GTEF…GHSY) and 353 to 382 (YDEY…LHEL). [4Fe-4S] cluster contacts are provided by Cys313, Cys316, Cys319, Cys323, Cys366, Cys369, and Cys373.

This sequence belongs to the LutB/YkgF family.

In terms of biological role, is involved in L-lactate degradation and allows cells to grow with lactate as the sole carbon source. Has probably a role as an electron transporter during oxidation of L-lactate. The sequence is that of Lactate utilization protein B from Bacillus velezensis (strain DSM 23117 / BGSC 10A6 / LMG 26770 / FZB42) (Bacillus amyloliquefaciens subsp. plantarum).